Reading from the N-terminus, the 343-residue chain is 3-isopropylmalate dehydrogenase (343 aa).

Substrate contacts are provided by Arg94, Arg104, Arg128, and Asp218. Positions 218, 242, and 246 each coordinate Mg(2+). 278–290 lines the NAD(+) pocket; the sequence is GSAPDIAGQNKAN.

The protein belongs to the isocitrate and isopropylmalate dehydrogenases family. LeuB type 2 subfamily. Homodimer. Mg(2+) serves as cofactor. Requires Mn(2+) as cofactor.

Its subcellular location is the cytoplasm. The catalysed reaction is (2R,3S)-3-isopropylmalate + NAD(+) = 4-methyl-2-oxopentanoate + CO2 + NADH. Its pathway is amino-acid biosynthesis; L-leucine biosynthesis; L-leucine from 3-methyl-2-oxobutanoate: step 3/4. Catalyzes the oxidation of 3-carboxy-2-hydroxy-4-methylpentanoate (3-isopropylmalate) to 3-carboxy-4-methyl-2-oxopentanoate. The product decarboxylates to 4-methyl-2 oxopentanoate. In Bifidobacterium longum subsp. infantis (strain ATCC 15697 / DSM 20088 / JCM 1222 / NCTC 11817 / S12), this protein is 3-isopropylmalate dehydrogenase.